The primary structure comprises 206 residues: Elongation factor 1-beta (206 aa).

Residue Ala-2 is modified to N-acetylalanine. Lys-13 participates in a covalent cross-link: Glycyl lysine isopeptide (Lys-Gly) (interchain with G-Cter in ubiquitin). Phosphoserine is present on residues Ser-31 and Ser-86.

The protein belongs to the EF-1-beta/EF-1-delta family. The eukaryotic elongation factor 1 complex (eEF1) is probably a heterohexamer. Two trimeric complexes, each composed of eEF1A (TEF1 or TEF2), eEF1Balpha (EFB1) and eEF1Bgamma (CAM1 or TEF4), are probably dimerized via the eF1Bgamma subunits. eEF1Balpha interacts directly with eEF1A. eEF1Balpha and eEF1Bgamma form the eEF1B subcomplex with the GEF activity. In terms of processing, S-thiolated in response to oxidative stress, probably inhibiting the protein and causing a reduction in protein synthesis.

The protein operates within protein biosynthesis; polypeptide chain elongation. In terms of biological role, catalytic subunit of the guanine nucleotide exchange factor (GEF) (eEF1B subcomplex) of the eukaryotic elongation factor 1 complex (eEF1). Stimulates the exchange of GDP for GTP on elongation factor 1A (eEF1A), probably by displacing GDP from the nucleotide binding pocket in eEF1A. The 30-fold higher concentration of GTP compared to GDP in cells favors the formation of eEF1A-GTP, which rapidly forms a ternary complex with aminoacyl-tRNA that in turn displaces eEF1B from the complex. This Saccharomyces cerevisiae (strain ATCC 204508 / S288c) (Baker's yeast) protein is Elongation factor 1-beta (EFB1).